Here is a 400-residue protein sequence, read N- to C-terminus: S-adenosylmethionine synthase (400 aa).

An ATP-binding site is contributed by H17. Residue D19 coordinates Mg(2+). Position 45 (E45) interacts with K(+). E58 and Q101 together coordinate L-methionine. Residues 101-111 form a flexible loop region; it reads QSADIAMGVDQ. Residues 177–179, 244–245, D253, 259–260, A276, and K280 contribute to the ATP site; these read DGK, RF, and RK. Residue D253 coordinates L-methionine. K284 lines the L-methionine pocket.

Belongs to the AdoMet synthase family. In terms of assembly, homotetramer; dimer of dimers. The cofactor is Mg(2+). Requires K(+) as cofactor.

Its subcellular location is the cytoplasm. The catalysed reaction is L-methionine + ATP + H2O = S-adenosyl-L-methionine + phosphate + diphosphate. It participates in amino-acid biosynthesis; S-adenosyl-L-methionine biosynthesis; S-adenosyl-L-methionine from L-methionine: step 1/1. Functionally, catalyzes the formation of S-adenosylmethionine (AdoMet) from methionine and ATP. The overall synthetic reaction is composed of two sequential steps, AdoMet formation and the subsequent tripolyphosphate hydrolysis which occurs prior to release of AdoMet from the enzyme. This is S-adenosylmethionine synthase from Bacillus subtilis (strain 168).